An 854-amino-acid polypeptide reads, in one-letter code: Protein translocase subunit SecA (854 aa).

Residues Gln89, 107 to 111 (GEGKT), and Asp501 contribute to the ATP site.

It belongs to the SecA family. Monomer and homodimer. Part of the essential Sec protein translocation apparatus which comprises SecA, SecYEG and auxiliary proteins SecDF-YajC and YidC.

It localises to the cell inner membrane. It is found in the cytoplasm. The enzyme catalyses ATP + H2O + cellular proteinSide 1 = ADP + phosphate + cellular proteinSide 2.. Its function is as follows. Part of the Sec protein translocase complex. Interacts with the SecYEG preprotein conducting channel. Has a central role in coupling the hydrolysis of ATP to the transfer of proteins into and across the cell membrane, serving both as a receptor for the preprotein-SecB complex and as an ATP-driven molecular motor driving the stepwise translocation of polypeptide chains across the membrane. This Pelagibacter ubique (strain HTCC1062) protein is Protein translocase subunit SecA.